Reading from the N-terminus, the 129-residue chain is Sm-like protein LSM4 (129 aa).

Positions 2-75 (LPLSLLKTAQ…IKYLRVPDEV (74 aa)) constitute a Sm domain. Over residues 79-90 (VQEEKTRTDRKP) the composition is skewed to basic and acidic residues. The segment at 79-129 (VQEEKTRTDRKPPGVGRGRGRGVDDGGARGRGRGTSMGKMGGNRGAGRGRG) is disordered. Residues 111-129 (RGTSMGKMGGNRGAGRGRG) are compositionally biased toward gly residues.

It belongs to the snRNP Sm proteins family. Component of the heptameric LSM1-LSM7 complex that forms a seven-membered ring structure with a donut shape. The LSM subunits are arranged in the order LSM1, LSM2, LSM3, LSM6, LSM5, LSM7 and LSM4. LSM4 subunit interacts only with its two neighboring subunits, LSM1A or LSM1B and LSM7. Component of the heptameric LSM2-LSM8 complex that forms a seven-membered ring structure with a donut shape. The LSM subunits are arranged in the order LSM8, LSM2, LSM3, LSM6, LSM5, LSM7 and LSM4. LSM4 subunit interacts only with its two neighboring subunits, LSM8 and LSM7. In terms of processing, methylated by PMRT15/SKB1 in response to salt stress or abscisic acid (ABA) treatment. In terms of tissue distribution, expressed in roots, leaves, stems, flowers and siliques.

The protein resides in the cytoplasm. Its subcellular location is the nucleus. In terms of biological role, component of LSM protein complexes, which are involved in RNA processing. Component of the cytoplasmic LSM1-LSM7 complex which is involved in mRNA degradation by promoting decapping and leading to accurate 5'-3' mRNA decay. The cytoplasmic LSM1-LSM7 complex regulates developmental gene expression by the decapping of specific development-related transcripts. Component of the nuclear LSM2-LSM8 complex which is involved splicing nuclear mRNAs. LSM2-LSM8 binds directly to the U6 small nuclear RNAs (snRNAs) and is essential for accurate splicing of selected development-related mRNAs through the stabilization of the spliceosomal U6 snRNA. Plays a critical role in the regulation of development-related gene expression. This chain is Sm-like protein LSM4, found in Arabidopsis thaliana (Mouse-ear cress).